The chain runs to 167 residues: Shikimate kinase (167 aa).

8-15 (GFMGSGKT) lines the ATP pocket.

It belongs to the shikimate kinase family.

It is found in the cytoplasm. It catalyses the reaction shikimate + ATP = 3-phosphoshikimate + ADP + H(+). The protein operates within metabolic intermediate biosynthesis; chorismate biosynthesis; chorismate from D-erythrose 4-phosphate and phosphoenolpyruvate: step 5/7. In Helicobacter hepaticus (strain ATCC 51449 / 3B1), this protein is Shikimate kinase.